The chain runs to 391 residues: Tryptophan synthase beta chain (391 aa).

At Lys-84 the chain carries N6-(pyridoxal phosphate)lysine.

This sequence belongs to the TrpB family. Tetramer of two alpha and two beta chains. Pyridoxal 5'-phosphate serves as cofactor.

It carries out the reaction (1S,2R)-1-C-(indol-3-yl)glycerol 3-phosphate + L-serine = D-glyceraldehyde 3-phosphate + L-tryptophan + H2O. Its pathway is amino-acid biosynthesis; L-tryptophan biosynthesis; L-tryptophan from chorismate: step 5/5. Its function is as follows. The beta subunit is responsible for the synthesis of L-tryptophan from indole and L-serine. This is Tryptophan synthase beta chain from Thermoanaerobacter sp. (strain X514).